The primary structure comprises 362 residues: 3-isopropylmalate dehydrogenase (362 aa).

Residue 78–91 (GPQWDTLPSDKRPE) coordinates NAD(+). Substrate contacts are provided by Arg98, Arg108, Arg136, and Asp226. Mg(2+)-binding residues include Asp226, Asp250, and Asp254. 284–296 (GSAPDIAGQDKAN) provides a ligand contact to NAD(+).

It belongs to the isocitrate and isopropylmalate dehydrogenases family. LeuB type 1 subfamily. In terms of assembly, homodimer. The cofactor is Mg(2+). Mn(2+) serves as cofactor.

It is found in the cytoplasm. It carries out the reaction (2R,3S)-3-isopropylmalate + NAD(+) = 4-methyl-2-oxopentanoate + CO2 + NADH. The protein operates within amino-acid biosynthesis; L-leucine biosynthesis; L-leucine from 3-methyl-2-oxobutanoate: step 3/4. Functionally, catalyzes the oxidation of 3-carboxy-2-hydroxy-4-methylpentanoate (3-isopropylmalate) to 3-carboxy-4-methyl-2-oxopentanoate. The product decarboxylates to 4-methyl-2 oxopentanoate. The polypeptide is 3-isopropylmalate dehydrogenase (Gloeobacter violaceus (strain ATCC 29082 / PCC 7421)).